Consider the following 258-residue polypeptide: Tryptophan synthase alpha chain (258 aa).

Active-site proton acceptor residues include glutamate 52 and aspartate 63.

The protein belongs to the TrpA family. As to quaternary structure, tetramer of two alpha and two beta chains.

It carries out the reaction (1S,2R)-1-C-(indol-3-yl)glycerol 3-phosphate + L-serine = D-glyceraldehyde 3-phosphate + L-tryptophan + H2O. The protein operates within amino-acid biosynthesis; L-tryptophan biosynthesis; L-tryptophan from chorismate: step 5/5. Functionally, the alpha subunit is responsible for the aldol cleavage of indoleglycerol phosphate to indole and glyceraldehyde 3-phosphate. This Streptococcus pneumoniae (strain JJA) protein is Tryptophan synthase alpha chain.